A 206-amino-acid polypeptide reads, in one-letter code: ATP-dependent dethiobiotin synthetase BioD (206 aa).

12–17 (DSGKTL) lines the ATP pocket. Residue threonine 16 participates in Mg(2+) binding. Lysine 32 is an active-site residue. Residue glutamate 99 coordinates Mg(2+). 99-102 (EGAG) lines the ATP pocket.

This sequence belongs to the dethiobiotin synthetase family. Homodimer. It depends on Mg(2+) as a cofactor.

It is found in the cytoplasm. The enzyme catalyses (7R,8S)-7,8-diammoniononanoate + CO2 + ATP = (4R,5S)-dethiobiotin + ADP + phosphate + 3 H(+). The protein operates within cofactor biosynthesis; biotin biosynthesis; biotin from 7,8-diaminononanoate: step 1/2. Functionally, catalyzes a mechanistically unusual reaction, the ATP-dependent insertion of CO2 between the N7 and N8 nitrogen atoms of 7,8-diaminopelargonic acid (DAPA, also called 7,8-diammoniononanoate) to form a ureido ring. This chain is ATP-dependent dethiobiotin synthetase BioD, found in Cytophaga hutchinsonii (strain ATCC 33406 / DSM 1761 / CIP 103989 / NBRC 15051 / NCIMB 9469 / D465).